We begin with the raw amino-acid sequence, 445 residues long: CBL-interacting serine/threonine-protein kinase 8 (445 aa).

The region spanning 9–262 is the Protein kinase domain; sequence YELGRTIGEG…IAEIRKDEWF (254 aa). ATP-binding positions include 15–23 and lysine 38; that span reads IGEGTFAKV. The Proton acceptor role is filled by aspartate 132. The activation loop stretch occupies residues 150–177; sequence DFGLSALPEQGVTILKTTCGTPNYVAPE. Residue serine 154 is modified to Phosphoserine. Position 166 is a phosphothreonine (threonine 166). The region spanning 302–326 is the NAF domain; it reads TGPLTLNAFDLIILSQGLNLATLFD. A PPI region spans residues 333-362; it reads KHQTRFISHKPANVVLSSMEVVSQSMGFKT.

Belongs to the protein kinase superfamily. CAMK Ser/Thr protein kinase family. SNF1 subfamily. As to quaternary structure, interacts with CBL1 and CBL9. Mn(2+) is required as a cofactor. In terms of tissue distribution, mostly expressed in roots, and, to a lower extent, in leaves, stems, flowers, and siliques.

It catalyses the reaction L-seryl-[protein] + ATP = O-phospho-L-seryl-[protein] + ADP + H(+). The catalysed reaction is L-threonyl-[protein] + ATP = O-phospho-L-threonyl-[protein] + ADP + H(+). Its function is as follows. CIPK serine-threonine protein kinases interact with CBL proteins. Binding of a CBL protein to the regulatory NAF domain of CIPK protein lead to the activation of the kinase in a calcium-dependent manner. This Arabidopsis thaliana (Mouse-ear cress) protein is CBL-interacting serine/threonine-protein kinase 8 (CIPK8).